The primary structure comprises 2327 residues: Genome polyprotein (2327 aa).

The 201-residue stretch at 1-201 folds into the Peptidase C28 domain; sequence MNTTDCFIAV…WKASVQRKLK (201 aa). Over 1 to 1475 the chain is Cytoplasmic; it reads MNTTDCFIAV…SFVKRAFKRL (1475 aa). Residues Cys-51, His-148, and Asp-163 each act as for leader protease activity in the active site. 2 disordered regions span residues 196 to 218 and 238 to 265; these read VQRKLKGAGQSSPATGSQNQSGN and QLGDNAISGGSNEGSTDTTSTHTTNTQN. Residue Gly-202 is the site of N-myristoyl glycine; by host attachment. Polar residues-rich tracts occupy residues 204-218 and 238-251; these read GQSSPATGSQNQSGN and QLGDNAISGGSNEG. Positions 252-265 are enriched in low complexity; the sequence is STDTTSTHTTNTQN. Residues 787-795 are antigenic epitope; sequence ALLRAATYY. Residues 864-866 carry the Cell attachment site motif; sequence RGD. Positions 1184-1348 constitute an SF3 helicase domain; that stretch reads NVHIANLCKV…DGYKINNKLD (165 aa). ATP is bound at residue 1212–1219; the sequence is GKSGQGKS. An intramembrane segment occupies 1476 to 1496; the sequence is KENFEIVALCLTLLANIVIMI. Topologically, residues 1497–2327 are cytoplasmic; sequence RETHKRQKMV…RWVNAVCGDA (831 aa). The interval 1524 to 1584 is disordered; that stretch reads QTLDEAEKNP…PYAGPLERQR (61 aa). The span at 1544 to 1558 shows a compositional bias: basic and acidic residues; sequence FRERTLPGQKARDDV. 3 positions are modified to O-(5'-phospho-RNA)-tyrosine: Tyr-1576, Tyr-1599, and Tyr-1623. A Peptidase C3 domain is found at 1647–1843; the sequence is APPTDLQKMV…YCSCVSRSML (197 aa). The active-site For protease 3C activity; Proton donor/acceptor is His-1690. Active-site for protease 3C activity residues include Asp-1728 and Cys-1807. Residues 1873–1881 carry the Nuclear localization signal motif; sequence MRKTKLAPT. In terms of domain architecture, RdRp catalytic spans 2091–2209; that stretch reads RNVWDVDYSA…ASDYDLDFEA (119 aa). Asp-2195 functions as the For RdRp activity in the catalytic mechanism.

It belongs to the picornaviruses polyprotein family. Interacts with host ISG15. In terms of assembly, interacts (via R-G-D motif) with host ITGAV/ITGB6. Interacts with host MAVS; this interaction inhibits binding of host TRAF3 to MAVS, thereby suppressing interferon-mediated responses. As to quaternary structure, forms homooligomers. Homohexamer. Interacts with host VIM. Interacts with host BECN1. In terms of assembly, interacts with host DCTN3. As to quaternary structure, interacts with RNA-dependent RNA polymerase; this interaction allows 3B-1 to binds 2 polymerases and act as a primer. It also allows the recruitment of the RNA-dependent RNA polymerase to host membranes. Interacts with RNA-dependent RNA polymerase; this interaction allows 3B-2 to act as a primer. In terms of assembly, interacts with RNA-dependent RNA polymerase; this interaction allows 3B-3 to act as a primer. As to quaternary structure, interacts with 3B-1; this interaction allows 3B-1 to binds 2 polymerases and act as a primer. It also allows the recruitment of the RNA-dependent RNA polymerase to host membranes. Interacts with 3B-2; this interaction allows 3B-2 to act as a primer. Interacts with 3B-3; this interaction allows 3B-3 to act as a primer. Removes six residues from its own C-terminus, generating sLb(pro). In terms of processing, specific enzymatic cleavages in vivo by the viral proteases yield a variety of precursors and mature proteins. The polyprotein seems to be cotranslationally cleaved at the 2A/2B junction by a ribosomal skip from one codon to the next without formation of a peptide bond. This process would release the L-P1-2A peptide from the translational complex. Post-translationally, during virion maturation, immature virions are rendered infectious following cleavage of VP0 into VP4 and VP2. This maturation seems to be an autocatalytic event triggered by the presence of RNA in the capsid and is followed by a conformational change of the particle. Myristoylation is required during RNA encapsidation and formation of the mature virus particle. In terms of processing, uridylylated by the polymerase and covalently linked to the 5'-end of genomic RNA. These uridylylated forms act as a nucleotide-peptide primer for the polymerase.

It is found in the host nucleus. It localises to the host cytoplasm. Its subcellular location is the virion. The protein resides in the host endoplasmic reticulum membrane. The protein localises to the host cytoplasmic vesicle membrane. It catalyses the reaction Autocatalytically cleaves itself from the polyprotein of the foot-and-mouth disease virus by hydrolysis of a Lys-|-Gly bond, but then cleaves host cell initiation factor eIF-4G at bonds -Gly-|-Arg- and -Lys-|-Arg-.. The enzyme catalyses a ribonucleoside 5'-triphosphate + H2O = a ribonucleoside 5'-diphosphate + phosphate + H(+). It carries out the reaction RNA(n) + a ribonucleoside 5'-triphosphate = RNA(n+1) + diphosphate. The catalysed reaction is Selective cleavage of Gln-|-Gly bond in the poliovirus polyprotein. In other picornavirus reactions Glu may be substituted for Gln, and Ser or Thr for Gly.. Functionally, autocatalytically cleaves itself from the polyprotein at the L/VP0 junction. Also cleaves the host translation initiation factors EIF4G1 and EIF4G3, in order to shut off the capped cellular mRNA transcription. Plays a role in counteracting host innate antiviral response using diverse mechanisms. Possesses a deubiquitinase activity acting on both 'Lys-48' and 'Lys-63'-linked polyubiquitin chains. In turn, inhibits the ubiquitination and subsequent activation of key signaling molecules of type I IFN response such as host RIGI, TBK1, TRAF3 and TRAF6. Inhibits host NF-kappa-B activity by inducing a decrease in RELA mRNA levels. Cleaves a peptide bond in the C-terminus of host ISG15, resulting in the damaging of this modifier that can no longer be attached to target proteins. Also cleaves host G3BP1 and G3BP2 in order to inhibit cytoplasmic stress granules assembly. Lies on the inner surface of the capsid shell. After binding to the host receptor, the capsid undergoes conformational changes. Capsid protein VP4 is released, capsid protein VP1 N-terminus is externalized, and together, they shape a pore in the host membrane through which the viral genome is translocated into the host cell cytoplasm. After genome has been released, the channel shrinks. In terms of biological role, forms an icosahedral capsid of pseudo T=3 symmetry with capsid proteins VP1 and VP3. The capsid is composed of 60 copies of each capsid protein organized in the form of twelve pentamers and encloses the viral positive strand RNA genome. Upon acidifcation in the endosome, dissociates into pentamers. Its function is as follows. Forms an icosahedral capsid of pseudo T=3 symmetry with capsid proteins VP0 and VP3. The capsid is composed of 60 copies of each capsid protein organized in the form of twelve pentamers and encloses the viral positive strand RNA genome. Upon acidifcation in the endosome, dissociates into pentamers. Functionally, forms an icosahedral capsid of pseudo T=3 symmetry with capsid proteins VP2 and VP3. The capsid is composed of 60 copies of each capsid protein organized in the form of twelve pentamers and encloses the viral positive strand RNA genome. Mediates cell entry by attachment to an integrin receptor, usually host ITGAV/ITGB6. In addition, targets host MAVS to suppress type I IFN pathway. Upon acidifcation in the endosome, dissociates into pentamers. Mediates self-processing of the polyprotein by a translational effect termed 'ribosome skipping'. Mechanistically, 2A-mediated cleavage occurs between the C-terminal glycine and the proline of the downstream protein 2B. In the case of foot-and-mouth disease virus, the 2A oligopeptide is post-translationally 'trimmed' from the C-terminus of the upstream protein 1D by 3C proteinase. In terms of biological role, plays an essential role in the virus replication cycle by acting as a viroporin. Creates a pore in the host endoplasmic reticulum and as a consequence releases Ca2+ in the cytoplasm of infected cell. In turn, high levels of cytoplasmic calcium may trigger membrane trafficking and transport of viral ER-associated proteins to viroplasms, sites of viral genome replication. Its function is as follows. Associates with and induces structural rearrangements of intracellular membranes. Triggers host autophagy by interacting with host BECN1 and thereby promotes viral replication. Participates in viral replication and interacts with host DHX9. Displays RNA-binding, nucleotide binding and NTPase activities. May play a role in virion morphogenesis and viral RNA encapsidation by interacting with the capsid protein VP3. Functionally, plays important roles in virus replication, virulence and host range. Cooperates with host DDX56 to inhibit IRF3 nuclear translocation and subsequent type I interferon production. Covalently linked to the 5'-end of both the positive-strand and negative-strand genomic RNAs. Acts as a genome-linked replication primer. In terms of biological role, cysteine protease that generates mature viral proteins from the precursor polyprotein. In addition to its proteolytic activity, binds to viral RNA and thus influences viral genome replication. RNA and substrate bind cooperatively to the protease. Its function is as follows. RNA-directed RNA polymerase 3D-POL replicates genomic and antigenomic RNA by recognizing replications specific signals. Covalently attaches UMP to a tyrosine of VPg, which is used to prime RNA synthesis. The positive stranded RNA genome is first replicated at virus induced membranous vesicles, creating a dsRNA genomic replication form. This dsRNA is then used as template to synthesize positive stranded RNA genomes. ss(+)RNA genomes are either translated, replicated or encapsidated. This Bos taurus (Bovine) protein is Genome polyprotein.